We begin with the raw amino-acid sequence, 236 residues long: tRNA (guanine-N(1)-)-methyltransferase (236 aa).

S-adenosyl-L-methionine is bound by residues G114 and 134–139 (IGDYIL).

Belongs to the RNA methyltransferase TrmD family. As to quaternary structure, homodimer.

The protein localises to the cytoplasm. The catalysed reaction is guanosine(37) in tRNA + S-adenosyl-L-methionine = N(1)-methylguanosine(37) in tRNA + S-adenosyl-L-homocysteine + H(+). Specifically methylates guanosine-37 in various tRNAs. The protein is tRNA (guanine-N(1)-)-methyltransferase of Wolbachia pipientis wMel.